Consider the following 483-residue polypeptide: 2-methylcitrate dehydratase (483 aa).

Belongs to the PrpD family. In terms of assembly, monomer.

The catalysed reaction is (2S,3S)-2-methylcitrate = 2-methyl-cis-aconitate + H2O. The enzyme catalyses citrate = D-threo-isocitrate. It functions in the pathway organic acid metabolism; propanoate degradation. It participates in carbohydrate metabolism; tricarboxylic acid cycle; isocitrate from oxaloacetate: step 2/2. Involved in the catabolism of short chain fatty acids (SCFA) via the tricarboxylic acid (TCA)(acetyl degradation route) and via the 2-methylcitrate cycle I (propionate degradation route). Catalyzes the dehydration of 2-methylcitrate (2-MC) to yield the cis isomer of 2-methyl-aconitate. It is also able to catalyze the dehydration of citrate and the hydration of cis-aconitate at a lower rate. Due to its broad substrate specificity, it seems to be responsible for the residual aconitase activity of the acnAB-null mutant. The chain is 2-methylcitrate dehydratase from Escherichia coli (strain K12).